Consider the following 203-residue polypeptide: UPF0301 protein Sde_3637 (203 aa).

It belongs to the UPF0301 (AlgH) family.

In Saccharophagus degradans (strain 2-40 / ATCC 43961 / DSM 17024), this protein is UPF0301 protein Sde_3637.